Here is a 155-residue protein sequence, read N- to C-terminus: MASKGTKLIATNKKARHDYFIEETFETGIVLVGTEVKSIRQGKLNIKDGYARVENSEVFLYNVHISPYEQGNIFNKDPLRVRKLLLHKSEIRKLIGYVQQKGYTLIPLSFYLKDGLIKVELGIGVGKKIYDKRQDIAKKDAARRIDKELRQREKQ.

The protein belongs to the SmpB family.

Its subcellular location is the cytoplasm. Its function is as follows. Required for rescue of stalled ribosomes mediated by trans-translation. Binds to transfer-messenger RNA (tmRNA), required for stable association of tmRNA with ribosomes. tmRNA and SmpB together mimic tRNA shape, replacing the anticodon stem-loop with SmpB. tmRNA is encoded by the ssrA gene; the 2 termini fold to resemble tRNA(Ala) and it encodes a 'tag peptide', a short internal open reading frame. During trans-translation Ala-aminoacylated tmRNA acts like a tRNA, entering the A-site of stalled ribosomes, displacing the stalled mRNA. The ribosome then switches to translate the ORF on the tmRNA; the nascent peptide is terminated with the 'tag peptide' encoded by the tmRNA and targeted for degradation. The ribosome is freed to recommence translation, which seems to be the essential function of trans-translation. The chain is SsrA-binding protein from Alkaliphilus oremlandii (strain OhILAs) (Clostridium oremlandii (strain OhILAs)).